Here is a 185-residue protein sequence, read N- to C-terminus: Hypoxanthine/guanine phosphoribosyltransferase (185 aa).

Belongs to the purine/pyrimidine phosphoribosyltransferase family. Archaeal HPRT subfamily. In terms of assembly, homodimer.

The protein resides in the cytoplasm. It catalyses the reaction IMP + diphosphate = hypoxanthine + 5-phospho-alpha-D-ribose 1-diphosphate. The catalysed reaction is GMP + diphosphate = guanine + 5-phospho-alpha-D-ribose 1-diphosphate. It functions in the pathway purine metabolism; IMP biosynthesis via salvage pathway; IMP from hypoxanthine: step 1/1. Its function is as follows. Catalyzes a salvage reaction resulting in the formation of IMP that is energically less costly than de novo synthesis. This chain is Hypoxanthine/guanine phosphoribosyltransferase, found in Methanococcus maripaludis (strain C7 / ATCC BAA-1331).